Reading from the N-terminus, the 53-residue chain is ATP synthase protein 8 (53 aa).

A helical membrane pass occupies residues 9–29; the sequence is WIFFLFFFICIFLIFNIMNYF.

It belongs to the ATPase protein 8 family. As to quaternary structure, F-type ATPases have 2 components, CF(1) - the catalytic core - and CF(0) - the membrane proton channel.

The protein resides in the mitochondrion membrane. In terms of biological role, mitochondrial membrane ATP synthase (F(1)F(0) ATP synthase or Complex V) produces ATP from ADP in the presence of a proton gradient across the membrane which is generated by electron transport complexes of the respiratory chain. F-type ATPases consist of two structural domains, F(1) - containing the extramembraneous catalytic core and F(0) - containing the membrane proton channel, linked together by a central stalk and a peripheral stalk. During catalysis, ATP synthesis in the catalytic domain of F(1) is coupled via a rotary mechanism of the central stalk subunits to proton translocation. Part of the complex F(0) domain. Minor subunit located with subunit a in the membrane. The protein is ATP synthase protein 8 (mt:ATPase8) of Bombyx mori (Silk moth).